The chain runs to 591 residues: Tricyclene synthase, chloroplastic (591 aa).

The N-terminal 45 residues, 1-45 (MATLLQIGSGVIYSNALRKTLRRPQSSTCIIVTETTPCNKSPTVQ), are a transit peptide targeting the chloroplast. Positions 302, 339, 343, 481, and 484 each coordinate (2E)-geranyl diphosphate. Mg(2+) contacts are provided by Asp339 and Asp343. Residues 339 to 343 (DDIYD) carry the DDXXD motif motif. The Mg(2+) site is built by Asn484, Thr488, and Glu492.

This sequence belongs to the terpene synthase family. Tpsb subfamily. Mg(2+) serves as cofactor. Mn(2+) is required as a cofactor. Predominantly expressed in flowers but also in leaves, siliques and in stems.

Its subcellular location is the plastid. It localises to the chloroplast stroma. It carries out the reaction (2E)-geranyl diphosphate = beta-myrcene + diphosphate. The catalysed reaction is (2E)-geranyl diphosphate = tricyclene + diphosphate. The enzyme catalyses (2E)-geranyl diphosphate = (E)-beta-ocimene + diphosphate. The protein operates within secondary metabolite biosynthesis; terpenoid biosynthesis. Involved in monoterpene (C10) biosynthesis. The major product is beta-myrcene (56%) followed by (E)-beta-ocimene (20%) and minor amounts (less than 5%) of the cyclic monoterpene (-)-limonene, (+)-limonene, 2-carene and tricyclene. In Arabidopsis thaliana (Mouse-ear cress), this protein is Tricyclene synthase, chloroplastic.